We begin with the raw amino-acid sequence, 274 residues long: Thiamine kinase (274 aa).

This sequence belongs to the thiamine kinase family.

The enzyme catalyses thiamine + ATP = thiamine phosphate + ADP + H(+). It participates in cofactor biosynthesis; thiamine diphosphate biosynthesis; thiamine phosphate from thiamine: step 1/1. Catalyzes the ATP-dependent phosphorylation of thiamine to thiamine phosphate. Is involved in thiamine salvage. The chain is Thiamine kinase from Escherichia coli O157:H7.